Here is a 58-residue protein sequence, read N- to C-terminus: Large ribosomal subunit protein uL30 (58 aa).

Belongs to the universal ribosomal protein uL30 family. Part of the 50S ribosomal subunit.

In Phocaeicola vulgatus (strain ATCC 8482 / DSM 1447 / JCM 5826 / CCUG 4940 / NBRC 14291 / NCTC 11154) (Bacteroides vulgatus), this protein is Large ribosomal subunit protein uL30.